A 232-amino-acid chain; its full sequence is Large ribosomal subunit protein uL1 (232 aa).

It belongs to the universal ribosomal protein uL1 family. As to quaternary structure, part of the 50S ribosomal subunit.

Binds directly to 23S rRNA. The L1 stalk is quite mobile in the ribosome, and is involved in E site tRNA release. Functionally, protein L1 is also a translational repressor protein, it controls the translation of the L11 operon by binding to its mRNA. The chain is Large ribosomal subunit protein uL1 from Burkholderia lata (strain ATCC 17760 / DSM 23089 / LMG 22485 / NCIMB 9086 / R18194 / 383).